A 312-amino-acid chain; its full sequence is Olfactory receptor 52A1 (312 aa).

Topologically, residues 1-27 are extracellular; the sequence is MSISNITVYMPSVLTLVGIPGLESVQC. N-linked (GlcNAc...) asparagine glycosylation is present at asparagine 5. The helical transmembrane segment at 28 to 48 threads the bilayer; sequence WIGIPFCAIYLIAMIGNSLLL. Over 49–56 the chain is Cytoplasmic; sequence SIIKSERS. A helical membrane pass occupies residues 57–77; that stretch reads LHEPLYIFLGMLGATDIALAS. The Extracellular segment spans residues 78 to 101; the sequence is SIMPKMLGIFWFNVPEIYFDSCLL. A disulfide bond links cysteine 99 and cysteine 182. Residues 102 to 122 form a helical membrane-spanning segment; the sequence is QMWFIHTLQGIESGILVAMAL. Residues 123–141 are Cytoplasmic-facing; it reads DRYVAICYPLRHANIFTHQ. A helical membrane pass occupies residues 142 to 162; it reads LVIQIGTMVVLRAAILVAPCL. The Extracellular portion of the chain corresponds to 163 to 199; it reads VLIKCRFQFYHTTVISHSYCEHMAIVKLAAANVQVNK. Residues 200-220 form a helical membrane-spanning segment; sequence IYGLFVAFTVAGFDLTFITLS. At 221–240 the chain is on the cytoplasmic side; it reads YIQIFITVFRLPQKEARFKA. Residues 241–261 traverse the membrane as a helical segment; that stretch reads FNTCIAHICVFLQFYLLAFFS. Topologically, residues 262-276 are extracellular; that stretch reads FFTHRFGSHISPYIH. Residues 277–297 traverse the membrane as a helical segment; sequence ILFSSIYLLVPPFLNPLVYGA. At 298-312 the chain is on the cytoplasmic side; that stretch reads KTTQIRIHVVKMFCS.

Belongs to the G-protein coupled receptor 1 family.

Its subcellular location is the cell membrane. Functionally, odorant receptor. This is Olfactory receptor 52A1 (OR52A1) from Homo sapiens (Human).